A 235-amino-acid chain; its full sequence is Carbonic anhydrase 1 (235 aa).

Positions 1-235 (GNKQSPVDIK…LKGRTVKASF (235 aa)) constitute an Alpha-carbonic anhydrase domain. The active-site Proton donor/acceptor is the His40. Residues His69, His71, and His94 each contribute to the Zn(2+) site. Substrate contacts are provided by residues Thr174 and 174-175 (TH).

Belongs to the alpha-carbonic anhydrase family. Zn(2+) is required as a cofactor.

It is found in the cytoplasm. The catalysed reaction is hydrogencarbonate + H(+) = CO2 + H2O. It catalyses the reaction urea = cyanamide + H2O. Inhibited by acetazolamide. In terms of biological role, catalyzes the reversible hydration of carbon dioxide. Can hydrate cyanamide to urea. The protein is Carbonic anhydrase 1 (CA1) of Oryctolagus cuniculus (Rabbit).